We begin with the raw amino-acid sequence, 131 residues long: MMNFRQRMGWIGVGLYLLASAAAFYYVFEINETYNKLALEHIQQHPQEPQEGTTWTHSLKVRLLSLPFWLWTIIFLIPYLQMFLFLYSCTRADPKTVGYCIIPICLAVICNRHQTFVKASNQISRLQLIDT.

2 consecutive transmembrane segments (helical) span residues 8-28 and 66-86; these read MGWIGVGLYLLASAAAFYYVF and LPFWLWTIIFLIPYLQMFLFL.

This sequence belongs to the LYSET family.

The protein resides in the golgi apparatus membrane. Its function is as follows. Required for mannose-6-phosphate-dependent trafficking of lysosomal enzymes. LYSET bridges GlcNAc-1-phosphate transferase (GNPTAB), to the membrane-bound transcription factor site-1 protease (MBTPS1), thus allowing proteolytic activation of the GNPTAB. GNPTAB is involved in the regulation of M6P-dependent Golgi-to-lysosome trafficking of lysosomal enzymes. LYSET is thus an essential factor for maturation and delivery of lysosomal hydrolases. This Gallus gallus (Chicken) protein is Lysosomal enzyme trafficking factor (LYSET).